A 710-amino-acid polypeptide reads, in one-letter code: Interleukin-1 receptor-associated kinase 1 (710 aa).

A Death domain is found at 27–106 (MCRFYKVMDA…DIITAWHPPA (80 aa)). T66 bears the Phosphothreonine; by PKC/PRKCI mark. A disordered region spans residues 107–133 (PVVPPSTAAPRPSSISAGSEAGDWSPR). A proST region region spans residues 110–211 (PPSTAAPRPS…FCEISQGTCN (102 aa)). Residues 111–123 (PSTAAPRPSSISA) are compositionally biased toward low complexity. Residue S131 is modified to Phosphoserine. Glycyl lysine isopeptide (Lys-Gly) (interchain with G-Cter in ubiquitin) cross-links involve residues K134 and K180. The tract at residues 169-190 (PPLPSSAPSSTKSSPESPVSGL) is disordered. A compositionally biased stretch (low complexity) spans 174 to 188 (SAPSSTKSSPESPVS). A Phosphothreonine; by IRAK4 modification is found at T209. In terms of domain architecture, Protein kinase spans 212–521 (FSEELRIGEG…TQVYKRLEGL (310 aa)). ATP contacts are provided by residues 218–226 (IGEGGFGCV) and K239. The active-site Proton acceptor is the D340. ATP-binding positions include 342-345 (KSSN) and D358. S375 is modified (phosphoserine). At T387 the chain carries Phosphothreonine. Disordered stretches follow at residues 527–655 (WELE…SEPP) and 689–710 (FPGLDLEPEKSQGPEESDEFQS). Residues 537–553 (PSPQENSYMSTTGSAQS) show a composition bias toward polar residues. S553 carries the post-translational modification Phosphoserine. Residues 567 to 576 (APAQAAQQLQ) show a composition bias toward low complexity. Residues 616-639 (SCTQGGTTRESSVRSSPGFQPTTM) show a composition bias toward polar residues. Residues 640-654 (EGSPTGSSSLLSSEP) are compositionally biased toward low complexity.

It belongs to the protein kinase superfamily. TKL Ser/Thr protein kinase family. Pelle subfamily. As to quaternary structure, homodimer. Forms a complex with TRAF6, PELI1, IRAK4 and MYD88. Direct binding of SMAD6 to PELI1 prevents complex formation and hence negatively regulates IL1R-TLR signaling and eventually NF-kappa-B-mediated gene expression. The TRAF6-PELI1-IRAK4-MYD88 complex recruits MAP3K7/TAK1, TAB1 and TAB2 to mediate NF-kappa-B activation. Interaction with MYD88 recruits IRAK1 to the stimulated receptor complex. Interacts with TOLLIP; this interaction occurs in the cytosol prior to receptor activation. Interacts with IL1RL1. Interacts (when polyubiquitinated) with IKBKG/NEMO. Interacts with RSAD2/viperin. Interacts with IRAK1BP1. Interacts with PELI2. Interacts with ZC3H12A; this interaction increases the interaction between ZC3H12A and IKBKB/IKKB. Interacts with IRAK4. Interacts with PELI3. Interacts with PELI1 and TRAF6. Interacts with INAVA; the interaction takes place upon PRR stimulation. Interacts (via C-terminus) with NFATC4 (via N-terminus). Mg(2+) is required as a cofactor. In terms of processing, following recruitment on the activated receptor complex, phosphorylated on Thr-209, probably by IRAK4, resulting in a conformational change of the kinase domain, allowing further phosphorylations to take place. Thr-387 phosphorylation in the activation loop is required to achieve full enzymatic activity. Polyubiquitinated by TRAF6 after cell stimulation with IL-1-beta by PELI1, PELI2 and PELI3. Polyubiquitination occurs with polyubiquitin chains linked through 'Lys-63'. Ubiquitination promotes interaction with NEMO/IKBKG. Also sumoylated; leading to nuclear translocation. As to expression, highly expressed in liver, followed by kidney and skeletal muscle.

The protein resides in the cytoplasm. It is found in the nucleus. The protein localises to the lipid droplet. The enzyme catalyses L-seryl-[protein] + ATP = O-phospho-L-seryl-[protein] + ADP + H(+). It carries out the reaction L-threonyl-[protein] + ATP = O-phospho-L-threonyl-[protein] + ADP + H(+). Its function is as follows. Serine/threonine-protein kinase that plays a critical role in initiating innate immune response against foreign pathogens. Involved in Toll-like receptor (TLR) and IL-1R signaling pathways. Is rapidly recruited by MYD88 to the receptor-signaling complex upon TLR activation. Association with MYD88 leads to IRAK1 phosphorylation by IRAK4 and subsequent autophosphorylation and kinase activation. Phosphorylates E3 ubiquitin ligases Pellino proteins (PELI1, PELI2 and PELI3) to promote pellino-mediated polyubiquitination of IRAK1. Then, the ubiquitin-binding domain of IKBKG/NEMO binds to polyubiquitinated IRAK1 bringing together the IRAK1-MAP3K7/TAK1-TRAF6 complex and the NEMO-IKKA-IKKB complex. In turn, MAP3K7/TAK1 activates IKKs (CHUK/IKKA and IKBKB/IKKB) leading to NF-kappa-B nuclear translocation and activation. Alternatively, phosphorylates TIRAP to promote its ubiquitination and subsequent degradation. Phosphorylates the interferon regulatory factor 7 (IRF7) to induce its activation and translocation to the nucleus, resulting in transcriptional activation of type I IFN genes, which drive the cell in an antiviral state. When sumoylated, translocates to the nucleus and phosphorylates STAT3. The polypeptide is Interleukin-1 receptor-associated kinase 1 (Irak1) (Mus musculus (Mouse)).